A 434-amino-acid chain; its full sequence is Citrate-proton symporter (434 aa).

At 1–21 (MAQHTPATSRAGTFGAILRVT) the chain is on the cytoplasmic side. Residues 22–42 (SGNFLEQFDFFLFGFYATYIA) traverse the membrane as a helical segment. Topologically, residues 43–54 (RTFFPAESEFAS) are periplasmic. The chain crosses the membrane as a helical span at residues 55–75 (LMLTFAVFGSGFLMRPVGAIV). The Cytoplasmic portion of the chain corresponds to 76-87 (LGAYIDRIGRRK). The helical transmembrane segment at 88–108 (GLMVTLAIMGCGTLLIALVPG) threads the bilayer. The Periplasmic segment spans residues 109–111 (YQT). Residues 112-132 (IGLAAPALVLLGRLLQGFSAG) form a helical membrane-spanning segment. The Cytoplasmic segment spans residues 133-164 (VELGGVSVYLSEIATPGNKGFYTSWQSASQQV). A helical transmembrane segment spans residues 165–185 (AIVVAALIGYSLNITLGHDAI). Ser186 is a topological domain (periplasmic). A helical transmembrane segment spans residues 187–207 (EWGWRIPFFIGCMIIPLIFVL). The Cytoplasmic portion of the chain corresponds to 208–238 (RRSLQETEAFLQRKHRPDTREIFATIAKNWR). The chain crosses the membrane as a helical span at residues 239–259 (IITAGTLLVAMTTTTFYFITV). The Periplasmic segment spans residues 260 to 276 (YTPTYGRTVLNLSARDS). The helical transmembrane segment at 277–297 (LIVTMLVGVSNFIWLPIGGAI) threads the bilayer. The Cytoplasmic portion of the chain corresponds to 298 to 304 (SDRIGRR). The chain crosses the membrane as a helical span at residues 305 to 325 (AVLMGITLLALITTWPVMQWL). Residues 326–335 (TAAPDFTRMT) lie on the Periplasmic side of the membrane. A helical membrane pass occupies residues 336 to 356 (LVLLWFSFFFGMYNGAMVAAL). Topologically, residues 357–366 (TEVMPVYVRT) are cytoplasmic. A helical membrane pass occupies residues 367–387 (VGFSLAFSLATAIFGGLTPAI). Residues 388-400 (STALVKLTGDKSS) are Periplasmic-facing. Residues 401–421 (PGWWLMCAALCGLAATAMLFV) traverse the membrane as a helical segment. At 422 to 434 (RLSRGYIAAENKA) the chain is on the cytoplasmic side.

Belongs to the major facilitator superfamily. Metabolite:H+ Symporter (MHS) family (TC 2.A.1.6) family.

The protein localises to the cell inner membrane. In terms of biological role, uptake of citrate across the boundary membrane with the concomitant transport of protons into the cell (symport system). The polypeptide is Citrate-proton symporter (citA) (Salmonella typhi).